The chain runs to 198 residues: VDNFRAAHEAVTSLTGRGHRSIALVSNAPAQGEQQYLISSVRERIDGYRAALHDAQIKISPNLIVLGGWDTKNLADQVRALCISPNRPTAFLATDSSVALVLLGVLREMDLSIPDDVSLICFDDADWTSAITPPLTVISQPVRDLATAATEDLIARLKGETSAPPKETLLPAVLIERGSVSGSSQGRGCIPNSRNVGD.

It participates in opine metabolism; mannopine biosynthesis [regulation]. Functionally, possible repressor for genes for mannityl-opine utilization and / or plasmid conjugative transfer. This chain is Probable opine utilization operon repressor (opnR), found in Rhizobium rhizogenes (Agrobacterium rhizogenes).